A 499-amino-acid chain; its full sequence is Lysine--tRNA ligase (499 aa).

Residues E408 and E415 each coordinate Mg(2+).

The protein belongs to the class-II aminoacyl-tRNA synthetase family. As to quaternary structure, homodimer. Mg(2+) serves as cofactor.

The protein localises to the cytoplasm. It catalyses the reaction tRNA(Lys) + L-lysine + ATP = L-lysyl-tRNA(Lys) + AMP + diphosphate. The sequence is that of Lysine--tRNA ligase from Thermoanaerobacter pseudethanolicus (strain ATCC 33223 / 39E) (Clostridium thermohydrosulfuricum).